The sequence spans 202 residues: Holliday junction resolvase RecU (202 aa).

Mg(2+) is bound by residues Thr85, Asp87, Glu100, and Gln119.

It belongs to the RecU family. Mg(2+) serves as cofactor.

The protein resides in the cytoplasm. It carries out the reaction Endonucleolytic cleavage at a junction such as a reciprocal single-stranded crossover between two homologous DNA duplexes (Holliday junction).. Its function is as follows. Endonuclease that resolves Holliday junction intermediates in genetic recombination. Cleaves mobile four-strand junctions by introducing symmetrical nicks in paired strands. Promotes annealing of linear ssDNA with homologous dsDNA. Required for DNA repair, homologous recombination and chromosome segregation. The protein is Holliday junction resolvase RecU of Streptococcus pyogenes serotype M6 (strain ATCC BAA-946 / MGAS10394).